The sequence spans 665 residues: RNA-directed RNA polymerase (665 aa).

Positions 310–485 (NKEEKVKEWS…LKEGKVNPSP (176 aa)) constitute a RdRp catalytic domain. 3 residues coordinate Mg(2+): D454, Y491, and G495.

As to quaternary structure, part of the packaging complex composed of RDRP, P4 and P7. Interacts with P7. Mg(2+) serves as cofactor. Mn(2+) is required as a cofactor.

The protein localises to the virion. The enzyme catalyses RNA(n) + a ribonucleoside 5'-triphosphate = RNA(n+1) + diphosphate. Rna-dependent RNA polymerase part of the packaging complex that packages the viral RNA segments, replicate them into a double-stranded form and transcribe them. This chain is RNA-directed RNA polymerase (P2), found in Pseudomonas phage phi6 (Bacteriophage phi-6).